A 599-amino-acid polypeptide reads, in one-letter code: NADH-quinone oxidoreductase subunit C/D (599 aa).

An NADH dehydrogenase I subunit C region spans residues 1 to 190 (MMIDQIAQES…DPFELTRQKE (190 aa)). The segment at 214–599 (DFMFLNLGPN…IDFVMSDVDR (386 aa)) is NADH dehydrogenase I subunit D.

It in the N-terminal section; belongs to the complex I 30 kDa subunit family. This sequence in the C-terminal section; belongs to the complex I 49 kDa subunit family. In terms of assembly, NDH-1 is composed of 13 different subunits. Subunits NuoB, CD, E, F, and G constitute the peripheral sector of the complex.

The protein resides in the cell inner membrane. It carries out the reaction a quinone + NADH + 5 H(+)(in) = a quinol + NAD(+) + 4 H(+)(out). Functionally, NDH-1 shuttles electrons from NADH, via FMN and iron-sulfur (Fe-S) centers, to quinones in the respiratory chain. The immediate electron acceptor for the enzyme in this species is believed to be ubiquinone. Couples the redox reaction to proton translocation (for every two electrons transferred, four hydrogen ions are translocated across the cytoplasmic membrane), and thus conserves the redox energy in a proton gradient. The sequence is that of NADH-quinone oxidoreductase subunit C/D from Photorhabdus laumondii subsp. laumondii (strain DSM 15139 / CIP 105565 / TT01) (Photorhabdus luminescens subsp. laumondii).